Reading from the N-terminus, the 431-residue chain is Trigger factor (431 aa).

In terms of domain architecture, PPIase FKBP-type spans 165-250; the sequence is GDTVVIDFDG…IHELKRKELP (86 aa).

The protein belongs to the FKBP-type PPIase family. Tig subfamily.

The protein localises to the cytoplasm. It catalyses the reaction [protein]-peptidylproline (omega=180) = [protein]-peptidylproline (omega=0). Functionally, involved in protein export. Acts as a chaperone by maintaining the newly synthesized protein in an open conformation. Functions as a peptidyl-prolyl cis-trans isomerase. The protein is Trigger factor of Leuconostoc mesenteroides subsp. mesenteroides (strain ATCC 8293 / DSM 20343 / BCRC 11652 / CCM 1803 / JCM 6124 / NCDO 523 / NBRC 100496 / NCIMB 8023 / NCTC 12954 / NRRL B-1118 / 37Y).